The following is a 91-amino-acid chain: DNA-directed RNA polymerase subunit omega (91 aa).

Belongs to the RNA polymerase subunit omega family. In terms of assembly, the RNAP catalytic core consists of 2 alpha, 1 beta, 1 beta' and 1 omega subunit. When a sigma factor is associated with the core the holoenzyme is formed, which can initiate transcription.

The catalysed reaction is RNA(n) + a ribonucleoside 5'-triphosphate = RNA(n+1) + diphosphate. Functionally, promotes RNA polymerase assembly. Latches the N- and C-terminal regions of the beta' subunit thereby facilitating its interaction with the beta and alpha subunits. This chain is DNA-directed RNA polymerase subunit omega, found in Pseudoalteromonas translucida (strain TAC 125).